A 248-amino-acid chain; its full sequence is Probable phosphatase VS_II0429 (248 aa).

Residues H8, H10, H16, H41, E74, H102, H132, D194, and H196 each coordinate Zn(2+).

This sequence belongs to the PHP family. Requires Zn(2+) as cofactor.

This chain is Probable phosphatase VS_II0429, found in Vibrio atlanticus (strain LGP32) (Vibrio splendidus (strain Mel32)).